Reading from the N-terminus, the 302-residue chain is Ribosomal protein L11 methyltransferase (302 aa).

Residues Thr148, Gly169, Asp191, and Asn237 each contribute to the S-adenosyl-L-methionine site.

The protein belongs to the methyltransferase superfamily. PrmA family.

Its subcellular location is the cytoplasm. It carries out the reaction L-lysyl-[protein] + 3 S-adenosyl-L-methionine = N(6),N(6),N(6)-trimethyl-L-lysyl-[protein] + 3 S-adenosyl-L-homocysteine + 3 H(+). Methylates ribosomal protein L11. The chain is Ribosomal protein L11 methyltransferase from Desulfosudis oleivorans (strain DSM 6200 / JCM 39069 / Hxd3) (Desulfococcus oleovorans).